Consider the following 174-residue polypeptide: Scytalone dehydratase-like protein Arp1 (174 aa).

Position 49 (Tyr49) interacts with substrate. Residues His84 and His109 contribute to the active site. Asn130 contacts substrate.

The protein belongs to the scytalone dehydratase family. As to quaternary structure, homotrimer. Each subunit contains an active site, located in the central part of the hydrophobic core of the monomer, which functions independently.

Functionally, scytalone dehydratase-like protein; part of the Pks2 gene cluster that mediates the formation of infectious structures (appressoria), enabling these fungi to kill insects faster. The product of the Pks2 gene cluster is different from the one of Pks1 and has still not been identified. The protein is Scytalone dehydratase-like protein Arp1 of Metarhizium majus (strain ARSEF 297).